A 134-amino-acid chain; its full sequence is Flagellar basal-body rod protein FlgC (134 aa).

The protein belongs to the flagella basal body rod proteins family. In terms of assembly, the basal body constitutes a major portion of the flagellar organelle and consists of four rings (L,P,S, and M) mounted on a central rod. The rod consists of about 26 subunits of FlgG in the distal portion, and FlgB, FlgC and FlgF are thought to build up the proximal portion of the rod with about 6 subunits each.

It localises to the bacterial flagellum basal body. This Salmonella typhi protein is Flagellar basal-body rod protein FlgC (flgC).